The sequence spans 367 residues: MNSNKKATIVVDAQFGSTGKGLIAGYLAERDQPDVVMTAWSANAGHTYINAEGRKFVHCMLANGIVSPKLTTVLIGPGSQMNAELLRDEILSCADLLQGKTILLHASAALILQKHVEEEAGPMTKIGSTKKGCGAAMIAKIRRNPDDNNTVGANGDYMEEHIYGPVREAGVFIRTATNAEYMAVVYDAERIQVEGAQGFSLGINNGFYPYVTSRECTPAQVAVDVNLPLAFIDKVVACMRTLPIRVANRYNDKGEQIGWSGPCYPDQKELDWEKDLGMEAELTTVTKLPRRIFTFSYEQTKAALEVIRPDEVFLNFCNYLEPDEVAAVIGTIERAAHELKVPGPMPLARYYGYGPTVNDIDLDMRHQ.

Ser17 (proton acceptor) is an active-site residue. ATP is bound by residues Ser17, Thr18, Gly19, Lys20, and Gly21. A dGMP-binding site is contributed by Ser17. Mg(2+) is bound at residue Ser17. Asn43 is a binding site for dGMP. Positions 45, 46, and 47 each coordinate ATP. Mg(2+) is bound at residue Gly45. Residues Ser128, Thr129, and Arg143 each coordinate dGMP. An ATP-binding site is contributed by Gln197. Thr212 is a binding site for dGMP. Thr284 serves as a coordination point for Mg(2+). Positions 284, 285, and 290 each coordinate L-aspartate. 3 residues coordinate ATP: Asn315, Asn318, and Gly354.

Belongs to the Caudovirales PurZ family. Requires Mg(2+) as cofactor.

The catalysed reaction is dGMP + L-aspartate + ATP = (2S)-2-amino-2'-deoxyadenylo-succinate + ADP + phosphate + 2 H(+). It functions in the pathway purine metabolism. Its function is as follows. Involved in the synthesis of the atypical nucleotide dZTP (2-amino-2'-deoxyadenosine-5'-triphosphate). Catalyzes the condensation of aspartate with deoxyguanylate into dSMP (N6-succino-2-amino-2'-deoxyadenylate), which undergoes defumarylation and phosphorylation respectively by host PurB and guanylate/nucleoside diphosphate kinases to give dZTP. dZTP is integrated into the viral genome instead of adenine by the viral DNA polymerase. This Z-base probably completely replaces adenosine and forms a triple bond to the opposite T-base. The resulting non-standard viral DNA is called Z-genome. The chemically modified DNA is probably harder for the host bacteria to digest with nucleases or restriction enzymes. This chain is N6-succino-2-amino-2'-deoxyadenylate synthase, found in Salmonella phage PMBT28.